The primary structure comprises 520 residues: Amine oxidase [flavin-containing] B (520 aa).

Residue S2 is modified to N-acetylserine. Over 2–489 (SSKCDVVVVG…TFLQRHLPSV (488 aa)) the chain is Cytoplasmic. The residue at position 52 (K52) is an N6-acetyllysine. Residue C397 is modified to S-8alpha-FAD cysteine. A helical; Anchor for type IV membrane protein membrane pass occupies residues 490 to 516 (PGLLKLIGLTTIFSATALGFLAHKRGL). The Mitochondrial intermembrane portion of the chain corresponds to 517–520 (LVRI).

In terms of assembly, monomer, homo- or heterodimer (containing two subunits of similar size). Each subunit contains a covalently bound flavin. Enzymatically active as monomer. Requires FAD as cofactor.

Its subcellular location is the mitochondrion outer membrane. The enzyme catalyses a secondary aliphatic amine + O2 + H2O = a primary amine + an aldehyde + H2O2. It catalyses the reaction a primary methyl amine + O2 + H2O = an aldehyde + H2O2 + NH4(+). It carries out the reaction benzylamine + O2 + H2O = benzaldehyde + H2O2 + NH4(+). The catalysed reaction is (R)-adrenaline + O2 + H2O = (R)-3,4-dihydroxymandelaldehyde + methylamine + H2O2. The enzyme catalyses dopamine + O2 + H2O = 3,4-dihydroxyphenylacetaldehyde + H2O2 + NH4(+). It catalyses the reaction tyramine + O2 + H2O = (4-hydroxyphenyl)acetaldehyde + H2O2 + NH4(+). It carries out the reaction (R)-noradrenaline + O2 + H2O = (R)-3,4-dihydroxymandelaldehyde + H2O2 + NH4(+). The catalysed reaction is 2-phenylethylamine + O2 + H2O = 2-phenylacetaldehyde + H2O2 + NH4(+). The enzyme catalyses N-acetylputrescine + O2 + H2O = 4-acetamidobutanal + H2O2 + NH4(+). Catalyzes the oxidative deamination of primary and some secondary amines such as neurotransmitters, and exogenous amines including the tertiary amine, neurotoxin 1-methyl-4-phenyl-1,2,3,6-tetrahydropyridine (MPTP), with concomitant reduction of oxygen to hydrogen peroxide and participates in the metabolism of neuroactive and vasoactive amines in the central nervous system and peripheral tissues. Preferentially degrades benzylamine and phenylethylamine. The protein is Amine oxidase [flavin-containing] B of Bos taurus (Bovine).